An 86-amino-acid chain; its full sequence is U15-lycotoxin-Ls1d (86 aa).

An N-terminal signal peptide occupies residues 1 to 20 (MNSKIFAVLLLLALLSCVLS). Residues 21 to 66 (DQYCPKSSITACKKMNIRNDCCKDDDCTGGSWCCATPCGNFCKYPT) form the WAP domain. 5 disulfides stabilise this stretch: cysteine 24–cysteine 54, cysteine 32–cysteine 58, cysteine 41–cysteine 53, cysteine 42–cysteine 80, and cysteine 47–cysteine 62.

The protein belongs to the venom protein 11 family. 01 (wap-1) subfamily. In terms of processing, contains 5 disulfide bonds. Expressed by the venom gland.

The protein localises to the secreted. Its function is as follows. Has antibacterial activity. In Lycosa singoriensis (Wolf spider), this protein is U15-lycotoxin-Ls1d.